We begin with the raw amino-acid sequence, 557 residues long: CTP synthase (557 aa).

Residues 1–270 form an amidoligase domain region; that stretch reads MTKYVFVTGG…DAIICEELKL (270 aa). Ser13 provides a ligand contact to CTP. A UTP-binding site is contributed by Ser13. Residues 14-19 and Asp71 contribute to the ATP site; that span reads SLGKGI. Asp71 and Glu144 together coordinate Mg(2+). CTP is bound by residues 151-153, 191-196, and Lys227; these read DIE and KTKPTQ. UTP is bound by residues 191 to 196 and Lys227; that span reads KTKPTQ. The 253-residue stretch at 295–547 folds into the Glutamine amidotransferase type-1 domain; the sequence is TIGMVGKYVD…VEAALAHHEA (253 aa). Gly356 is a binding site for L-glutamine. Cys383 functions as the Nucleophile; for glutamine hydrolysis in the catalytic mechanism. L-glutamine-binding positions include 384 to 387, Glu407, and Arg473; that span reads LGMQ. Active-site residues include His520 and Glu522.

It belongs to the CTP synthase family. Homotetramer.

The catalysed reaction is UTP + L-glutamine + ATP + H2O = CTP + L-glutamate + ADP + phosphate + 2 H(+). It carries out the reaction L-glutamine + H2O = L-glutamate + NH4(+). It catalyses the reaction UTP + NH4(+) + ATP = CTP + ADP + phosphate + 2 H(+). It functions in the pathway pyrimidine metabolism; CTP biosynthesis via de novo pathway; CTP from UDP: step 2/2. Allosterically activated by GTP, when glutamine is the substrate; GTP has no effect on the reaction when ammonia is the substrate. The allosteric effector GTP functions by stabilizing the protein conformation that binds the tetrahedral intermediate(s) formed during glutamine hydrolysis. Inhibited by the product CTP, via allosteric rather than competitive inhibition. Catalyzes the ATP-dependent amination of UTP to CTP with either L-glutamine or ammonia as the source of nitrogen. Regulates intracellular CTP levels through interactions with the four ribonucleotide triphosphates. This Paraburkholderia phytofirmans (strain DSM 17436 / LMG 22146 / PsJN) (Burkholderia phytofirmans) protein is CTP synthase.